The following is a 278-amino-acid chain: 1-acyl-sn-glycerol-3-phosphate acyltransferase beta (278 aa).

The N-terminal stretch at 1 to 23 (MDPWPWLTAALLLLLLLVQLSRT) is a signal peptide. Topologically, residues 24–29 (ARFYAK) are lumenal. A helical transmembrane segment spans residues 30 to 50 (VGLYCVLCLSFSAAASIVCLL). Residues 51–121 (RHGGRTVDNM…PKRCVQIAKR (71 aa)) lie on the Cytoplasmic side of the membrane. Residues 98-103 (HQSILD) carry the HXXXXD motif motif. A helical membrane pass occupies residues 122-142 (ELMFTGPVGLIMYLGGVYFIN). Residues 143-278 (RQQARTAMSV…IKEPGVLPAQ (136 aa)) are Lumenal-facing. Residues 172–175 (EGTR) carry the EGTR motif motif.

The protein belongs to the 1-acyl-sn-glycerol-3-phosphate acyltransferase family. As to expression, expressed at high levels in the liver, at intermediate levels in the kidney, gut, heart and skeletal muscles. Undetectable in brain and spleen.

It localises to the endoplasmic reticulum membrane. It carries out the reaction a 1-acyl-sn-glycero-3-phosphate + an acyl-CoA = a 1,2-diacyl-sn-glycero-3-phosphate + CoA. The enzyme catalyses 1-(9Z-octadecenoyl)-sn-glycero-3-phosphate + (9Z)-octadecenoyl-CoA = 1,2-di-(9Z-octadecenoyl)-sn-glycero-3-phosphate + CoA. The catalysed reaction is 1-(9Z-octadecenoyl)-sn-glycero-3-phosphate + hexadecanoyl-CoA = 1-(9Z)-octadecenoyl-2-hexadecanoyl-sn-glycero-3-phosphate + CoA. It catalyses the reaction heptadecanoyl-CoA + 1-(9Z-octadecenoyl)-sn-glycero-3-phosphate = 1-(9Z)-octadecenoyl-2-heptadecanoyl-sn-glycero-3-phosphate + CoA. It carries out the reaction 1-(9Z-octadecenoyl)-sn-glycero-3-phosphate + (9Z,12Z)-octadecadienoyl-CoA = 1-(9Z)-octadecenoyl-2-(9Z,12Z)-octadecadienoyl-sn-glycero-3-phosphate + CoA. The enzyme catalyses 1-(9Z-octadecenoyl)-sn-glycero-3-phosphate + tetradecanoyl-CoA = 1-(9Z)-octadecenoyl-2-tetradecanoyl-sn-glycero-3-phosphate + CoA. The catalysed reaction is pentadecanoyl-CoA + 1-(9Z-octadecenoyl)-sn-glycero-3-phosphate = 1-(9Z)-octadecenoyl-2-pentadecanoyl-sn-glycero-3-phosphate + CoA. It catalyses the reaction 1-hexadecanoyl-sn-glycero-3-phosphate + (9Z)-octadecenoyl-CoA = 1-hexadecanoyl-2-(9Z-octadecenoyl)-sn-glycero-3-phosphate + CoA. It carries out the reaction 1-tetradecanoyl-sn-glycerol 3-phosphate + (9Z)-octadecenoyl-CoA = 1-tetradecanoyl-2-(9Z)-octadecenoyl-sn-glycero-3-phosphate + CoA. The enzyme catalyses 1-(9Z,12Z,15Z)-octadecatrienoyl-sn-glycero-3-phosphate + (9Z)-octadecenoyl-CoA = 1-(9Z,12Z,15Z)-octadecatrienoyl-2-(9Z)-octadecenoyl-sn-glycero-3-phosphate + CoA. The catalysed reaction is 1-(6Z,9Z,12Z-octadecatrienoyl)-sn-glycero-3-phosphate + (9Z)-octadecenoyl-CoA = (6Z,9Z,12Z)-octadecatrienoyl-2-(9Z)-octadecenoyl-sn-glycero-3-phosphate + CoA. It catalyses the reaction 1-eicosanoyl-sn-glycero-3-phosphate + (9Z)-octadecenoyl-CoA = 1-eicosanoyl-2-(9Z)-octadecenoyl-sn-glycero-3-phosphate + CoA. It carries out the reaction 1-hexadecanoyl-sn-glycero-3-phosphate + octadecanoyl-CoA = 1-hexadecanoyl-2-octadecanoyl-sn-glycero-3-phosphate + CoA. The enzyme catalyses 1-hexadecanoyl-sn-glycero-3-phosphate + (5Z,8Z,11Z,14Z)-eicosatetraenoyl-CoA = 1-hexadecanoyl-2-(5Z,8Z,11Z,14Z-eicosatetraenoyl)-sn-glycero-3-phosphate + CoA. The catalysed reaction is 1-hexadecanoyl-sn-glycero-3-phosphate + hexadecanoyl-CoA = 1,2-dihexadecanoyl-sn-glycero-3-phosphate + CoA. It catalyses the reaction 1-hexadecanoyl-sn-glycero-3-phosphate + tetradecanoyl-CoA = 1-hexadecanoyl-2-tetradecanoyl-sn-glycero-3-phosphate + CoA. It carries out the reaction (11Z)-octadecenoyl-CoA + 1-(9Z-octadecenoyl)-sn-glycero-3-phosphate = 1-(9Z)-octadecenoyl-2-(11Z)-octadecenoyl-sn-glycero-3-phosphate + CoA. It participates in phospholipid metabolism; CDP-diacylglycerol biosynthesis; CDP-diacylglycerol from sn-glycerol 3-phosphate: step 2/3. Converts 1-acyl-sn-glycerol-3-phosphate (lysophosphatidic acid or LPA) into 1,2-diacyl-sn-glycerol-3-phosphate (phosphatidic acid or PA) by incorporating an acyl moiety at the sn-2 position of the glycerol backbone. This is 1-acyl-sn-glycerol-3-phosphate acyltransferase beta (Agpat2) from Mus musculus (Mouse).